Consider the following 447-residue polypeptide: 23S rRNA (uracil(1939)-C(5))-methyltransferase RlmD (447 aa).

The TRAM domain maps to 7-66; that stretch reads RKPLSQEPQKASIEALTHEGRGIAHVAGKTVFIDGALPGETVWFHYLRRRGKFDEGRVLE. Cys79, Cys85, Cys88, and Cys168 together coordinate [4Fe-4S] cluster. Positions 275, 304, 309, 325, 352, and 374 each coordinate S-adenosyl-L-methionine. Cys400 functions as the Nucleophile in the catalytic mechanism.

Belongs to the class I-like SAM-binding methyltransferase superfamily. RNA M5U methyltransferase family. RlmD subfamily.

The enzyme catalyses uridine(1939) in 23S rRNA + S-adenosyl-L-methionine = 5-methyluridine(1939) in 23S rRNA + S-adenosyl-L-homocysteine + H(+). Functionally, catalyzes the formation of 5-methyl-uridine at position 1939 (m5U1939) in 23S rRNA. This chain is 23S rRNA (uracil(1939)-C(5))-methyltransferase RlmD, found in Nitrosococcus oceani (strain ATCC 19707 / BCRC 17464 / JCM 30415 / NCIMB 11848 / C-107).